A 158-amino-acid chain; its full sequence is Transcription elongation factor GreA (158 aa).

This sequence belongs to the GreA/GreB family.

Its function is as follows. Necessary for efficient RNA polymerase transcription elongation past template-encoded arresting sites. The arresting sites in DNA have the property of trapping a certain fraction of elongating RNA polymerases that pass through, resulting in locked ternary complexes. Cleavage of the nascent transcript by cleavage factors such as GreA or GreB allows the resumption of elongation from the new 3'terminus. GreA releases sequences of 2 to 3 nucleotides. This chain is Transcription elongation factor GreA, found in Psychrobacter arcticus (strain DSM 17307 / VKM B-2377 / 273-4).